The primary structure comprises 413 residues: Multifunctional CCA protein (413 aa).

Residues Gly8 and Arg11 each contribute to the ATP site. CTP contacts are provided by Gly8 and Arg11. Mg(2+)-binding residues include Glu21 and Asp23. ATP contacts are provided by Arg91, Arg137, and Arg140. Positions 91, 137, and 140 each coordinate CTP. Residues 228 to 329 (TGEHTLLALA…LKLLEGLDLF (102 aa)) form the HD domain.

It belongs to the tRNA nucleotidyltransferase/poly(A) polymerase family. Bacterial CCA-adding enzyme type 1 subfamily. As to quaternary structure, monomer. Can also form homodimers and oligomers. Requires Mg(2+) as cofactor. Ni(2+) serves as cofactor.

The enzyme catalyses a tRNA precursor + 2 CTP + ATP = a tRNA with a 3' CCA end + 3 diphosphate. It carries out the reaction a tRNA with a 3' CCA end + 2 CTP + ATP = a tRNA with a 3' CCACCA end + 3 diphosphate. Catalyzes the addition and repair of the essential 3'-terminal CCA sequence in tRNAs without using a nucleic acid template. Adds these three nucleotides in the order of C, C, and A to the tRNA nucleotide-73, using CTP and ATP as substrates and producing inorganic pyrophosphate. tRNA 3'-terminal CCA addition is required both for tRNA processing and repair. Also involved in tRNA surveillance by mediating tandem CCA addition to generate a CCACCA at the 3' terminus of unstable tRNAs. While stable tRNAs receive only 3'-terminal CCA, unstable tRNAs are marked with CCACCA and rapidly degraded. The polypeptide is Multifunctional CCA protein (Alkalilimnicola ehrlichii (strain ATCC BAA-1101 / DSM 17681 / MLHE-1)).